Here is a 201-residue protein sequence, read N- to C-terminus: Putative lipoprotein LppC (201 aa).

Positions Met-1 to Gly-23 are cleaved as a signal peptide. The N-palmitoyl cysteine moiety is linked to residue Cys-24. Residue Cys-24 is the site of S-diacylglycerol cysteine attachment. Prevents bacterial uptake by a human macrophage-like cell line regions lie at residues Gly-77–Ala-96, Leu-97–Gly-116, and Ile-117–Val-136. Residues Gly-122 to Gly-141 are disordered.

This sequence belongs to the UPF0098 family.

The protein resides in the cell membrane. The protein localises to the cell surface. Functionally, probably involved in bacterial recognition and uptake by its host (human). This Mycobacterium tuberculosis (strain ATCC 25618 / H37Rv) protein is Putative lipoprotein LppC.